Here is a 146-residue protein sequence, read N- to C-terminus: Small ribosomal subunit protein uS5 (146 aa).

In terms of domain architecture, S5 DRBM spans 8-71 (FKEVVVNIGR…DDAFKNIIKV (64 aa)).

The protein belongs to the universal ribosomal protein uS5 family. Part of the 30S ribosomal subunit. Contacts proteins S4 and S8.

With S4 and S12 plays an important role in translational accuracy. Its function is as follows. Located at the back of the 30S subunit body where it stabilizes the conformation of the head with respect to the body. This chain is Small ribosomal subunit protein uS5, found in Wolinella succinogenes (strain ATCC 29543 / DSM 1740 / CCUG 13145 / JCM 31913 / LMG 7466 / NCTC 11488 / FDC 602W) (Vibrio succinogenes).